Here is a 220-residue protein sequence, read N- to C-terminus: Probable GTP-binding protein EngB (220 aa).

In terms of domain architecture, EngB-type G spans 24–207 (PQPEVAFAGR…HELIESWIAP (184 aa)). GTP contacts are provided by residues 32–39 (GRSNAGKS), 59–63 (GRTQH), 81–84 (DLPG), 148–151 (TKCD), and 185–188 (LFSA). Residues serine 39 and threonine 61 each contribute to the Mg(2+) site.

This sequence belongs to the TRAFAC class TrmE-Era-EngA-EngB-Septin-like GTPase superfamily. EngB GTPase family. Mg(2+) is required as a cofactor.

Necessary for normal cell division and for the maintenance of normal septation. In Paraburkholderia phymatum (strain DSM 17167 / CIP 108236 / LMG 21445 / STM815) (Burkholderia phymatum), this protein is Probable GTP-binding protein EngB.